The following is a 466-amino-acid chain: 20-hydroxyecdysone protein (466 aa).

The first 16 residues, 1–16 (MKPVALILVFLAISQA), serve as a signal peptide directing secretion. Residues 48 to 50 (EVK) form a 1; approximate repeat. A 16 X repeats region spans residues 48–157 (EVKAEEVKPE…EIKKEATEIK (110 aa)). One copy of the 2; approximate repeat lies at 53-55 (EVK). The tract at residues 55-94 (KPEEVKPIAQEEKAKDLKEEVKPEIKPEIKEQPKPDIKDE) is disordered. A 3; approximate repeat occupies 58-60 (EVK). The 4; approximate repeat unit spans residues 70 to 72 (DLK). One copy of the 5; approximate repeat lies at 74 to 76 (EVK). Residues 78–80 (EIK) form a 6; approximate repeat. A 7; approximate repeat occupies 82-84 (EIK). The stretch at 90 to 92 (DIK) is one 8; approximate repeat. The 9; approximate repeat unit spans residues 94-96 (EIK). The stretch at 98–100 (DLK) is one 10; approximate repeat. An 11; approximate repeat occupies 102-104 (DIK). One copy of the 12; approximate repeat lies at 106 to 108 (ELK). A disordered region spans residues 119–220 (PNAKPLELKE…QQSTTQGNFV (102 aa)). The span at 124–160 (LELKEKSLEAEEKPQEIKEEVQQPEIKKEATEIKEEP) shows a compositional bias: basic and acidic residues. Residues 125 to 127 (ELK) form a 13; approximate repeat. A 14; approximate repeat occupies 139–141 (EIK). A 15; approximate repeat occupies 148 to 150 (EIK). The 16; approximate repeat unit spans residues 155–157 (EIK). Low complexity predominate over residues 170–180 (AEETVVVPAEE). Over residues 185 to 194 (PVEQEQSENQ) the composition is skewed to polar residues. Over residues 203–216 (QATQATPTQQSTTQ) the composition is skewed to low complexity. N-linked (GlcNAc...) asparagine glycosylation is found at N294 and N352. Residues 378-435 (RPQNAPAAAPATQATEKPAVDDKIDPANDEVGEFVPESDNELRASGENIDDSFEDAGV) are disordered. Over residues 379-394 (PQNAPAAAPATQATEK) the composition is skewed to low complexity. Residues 404 to 416 (ANDEVGEFVPESD) are compositionally biased toward acidic residues.

It is found in the secreted. Its function is as follows. Probably has an essential role in embryogenesis, induces morphogenesis of imaginal disks, and may participate in multimolecular aggregates. In Drosophila melanogaster (Fruit fly), this protein is 20-hydroxyecdysone protein (ImpE2).